Consider the following 444-residue polypeptide: Maintenance of mitochondrial morphology protein 1 (444 aa).

Over residues 1–16 (MKGVENTLSQSESVNR) the composition is skewed to polar residues. Positions 1–20 (MKGVENTLSQSESVNRGYNG) are disordered. The Lumenal segment spans residues 1–107 (MKGVENTLSQ…TFSSRSFAEG (107 aa)). The chain crosses the membrane as a helical span at residues 108-128 (LVVGQLSVIVVLIFFIKFFIF). At 129-444 (SDGPAKTGGG…QEEDPSRAPE (316 aa)) the chain is on the cytoplasmic side. A disordered region spans residues 136 to 157 (GGGGGSSAESRSSGFTGSPLTS). The segment covering 142–157 (SAESRSSGFTGSPLTS) has biased composition (low complexity). Residues 204 to 418 (SPESLDWFNV…EPRFQFVKLP (215 aa)) form the SMP-LTD domain. The disordered stretch occupies residues 425–444 (KNTREEKSDMQEEDPSRAPE). Basic and acidic residues predominate over residues 426–444 (NTREEKSDMQEEDPSRAPE).

It belongs to the MMM1 family. Homodimer. Component of the ER-mitochondria encounter structure (ERMES) or MDM complex, composed of MMM1, MDM10, MDM12 and MDM34. An MMM1 homodimer associates with one molecule of MDM12 on each side in a pairwise head-to-tail manner, and the SMP-LTD domains of MMM1 and MDM12 generate a continuous hydrophobic tunnel for phospholipid trafficking.

Its subcellular location is the endoplasmic reticulum membrane. Component of the ERMES/MDM complex, which serves as a molecular tether to connect the endoplasmic reticulum (ER) and mitochondria. Components of this complex are involved in the control of mitochondrial shape and protein biogenesis, and function in nonvesicular lipid trafficking between the ER and mitochondria. The MDM12-MMM1 subcomplex functions in the major beta-barrel assembly pathway that is responsible for biogenesis of all outer membrane beta-barrel proteins, and acts in a late step after the SAM complex. The MDM10-MDM12-MMM1 subcomplex further acts in the TOM40-specific pathway after the action of the MDM12-MMM1 complex. Essential for establishing and maintaining the structure of mitochondria and maintenance of mtDNA nucleoids. This is Maintenance of mitochondrial morphology protein 1 from Eremothecium gossypii (strain ATCC 10895 / CBS 109.51 / FGSC 9923 / NRRL Y-1056) (Yeast).